The sequence spans 328 residues: Ketol-acid reductoisomerase (NADP(+)) (328 aa).

Residues 2–181 (AKIYRETDAD…GFTRVGVIET (180 aa)) enclose the KARI N-terminal Rossmann domain. Residues 25–28 (YGIQ), Arg48, Ser52, and 82–85 (DMVQ) contribute to the NADP(+) site. His107 is an active-site residue. Residue Gly133 coordinates NADP(+). Residues 182 to 327 (TFAEETETDL…EDLRRLMRSG (146 aa)) form the KARI C-terminal knotted domain. The Mg(2+) site is built by Asp190, Glu194, Glu226, and Glu230. A substrate-binding site is contributed by Ser251.

Belongs to the ketol-acid reductoisomerase family. Mg(2+) is required as a cofactor.

The catalysed reaction is (2R)-2,3-dihydroxy-3-methylbutanoate + NADP(+) = (2S)-2-acetolactate + NADPH + H(+). The enzyme catalyses (2R,3R)-2,3-dihydroxy-3-methylpentanoate + NADP(+) = (S)-2-ethyl-2-hydroxy-3-oxobutanoate + NADPH + H(+). It functions in the pathway amino-acid biosynthesis; L-isoleucine biosynthesis; L-isoleucine from 2-oxobutanoate: step 2/4. It participates in amino-acid biosynthesis; L-valine biosynthesis; L-valine from pyruvate: step 2/4. In terms of biological role, involved in the biosynthesis of branched-chain amino acids (BCAA). Catalyzes an alkyl-migration followed by a ketol-acid reduction of (S)-2-acetolactate (S2AL) to yield (R)-2,3-dihydroxy-isovalerate. In the isomerase reaction, S2AL is rearranged via a Mg-dependent methyl migration to produce 3-hydroxy-3-methyl-2-ketobutyrate (HMKB). In the reductase reaction, this 2-ketoacid undergoes a metal-dependent reduction by NADPH to yield (R)-2,3-dihydroxy-isovalerate. This is Ketol-acid reductoisomerase (NADP(+)) from Caldivirga maquilingensis (strain ATCC 700844 / DSM 13496 / JCM 10307 / IC-167).